We begin with the raw amino-acid sequence, 165 residues long: 6,7-dimethyl-8-ribityllumazine synthase (165 aa).

Residues phenylalanine 24, 62-64 (AFE), and 86-88 (AVI) contribute to the 5-amino-6-(D-ribitylamino)uracil site. 91–92 (DT) contacts (2S)-2-hydroxy-3-oxobutyl phosphate. Histidine 94 acts as the Proton donor in catalysis. Position 119 (phenylalanine 119) interacts with 5-amino-6-(D-ribitylamino)uracil. A (2S)-2-hydroxy-3-oxobutyl phosphate-binding site is contributed by arginine 133.

This sequence belongs to the DMRL synthase family.

It carries out the reaction (2S)-2-hydroxy-3-oxobutyl phosphate + 5-amino-6-(D-ribitylamino)uracil = 6,7-dimethyl-8-(1-D-ribityl)lumazine + phosphate + 2 H2O + H(+). It participates in cofactor biosynthesis; riboflavin biosynthesis; riboflavin from 2-hydroxy-3-oxobutyl phosphate and 5-amino-6-(D-ribitylamino)uracil: step 1/2. Functionally, catalyzes the formation of 6,7-dimethyl-8-ribityllumazine by condensation of 5-amino-6-(D-ribitylamino)uracil with 3,4-dihydroxy-2-butanone 4-phosphate. This is the penultimate step in the biosynthesis of riboflavin. The protein is 6,7-dimethyl-8-ribityllumazine synthase of Prochlorococcus marinus (strain MIT 9303).